The chain runs to 101 residues: NAD(P)H-quinone oxidoreductase subunit 4L, chloroplastic (101 aa).

3 consecutive transmembrane segments (helical) span residues 2–22 (MFEL…YGLI), 32–52 (ICLE…SDLF), and 61–81 (IFAI…LSIL).

Belongs to the complex I subunit 4L family. In terms of assembly, NDH is composed of at least 16 different subunits, 5 of which are encoded in the nucleus.

It localises to the plastid. The protein localises to the chloroplast thylakoid membrane. It catalyses the reaction a plastoquinone + NADH + (n+1) H(+)(in) = a plastoquinol + NAD(+) + n H(+)(out). The catalysed reaction is a plastoquinone + NADPH + (n+1) H(+)(in) = a plastoquinol + NADP(+) + n H(+)(out). Its function is as follows. NDH shuttles electrons from NAD(P)H:plastoquinone, via FMN and iron-sulfur (Fe-S) centers, to quinones in the photosynthetic chain and possibly in a chloroplast respiratory chain. The immediate electron acceptor for the enzyme in this species is believed to be plastoquinone. Couples the redox reaction to proton translocation, and thus conserves the redox energy in a proton gradient. The protein is NAD(P)H-quinone oxidoreductase subunit 4L, chloroplastic of Lolium perenne (Perennial ryegrass).